The following is a 385-amino-acid chain: Cotranscriptional regulator ARB2A homolog (385 aa).

Disordered regions lie at residues 1–65 (MSDI…NGEE) and 220–239 (EEQK…NGKL). The segment covering 52-62 (NNNNNNSNNSN) has biased composition (low complexity). Residues 220 to 238 (EEQKEKAKEEEEKKDDNGK) are compositionally biased toward basic and acidic residues.

This sequence belongs to the ARB2A family.

The polypeptide is Cotranscriptional regulator ARB2A homolog (Dictyostelium discoideum (Social amoeba)).